A 423-amino-acid chain; its full sequence is Gamma-glutamyl phosphate reductase (423 aa).

Belongs to the gamma-glutamyl phosphate reductase family.

It localises to the cytoplasm. The enzyme catalyses L-glutamate 5-semialdehyde + phosphate + NADP(+) = L-glutamyl 5-phosphate + NADPH + H(+). Its pathway is amino-acid biosynthesis; L-proline biosynthesis; L-glutamate 5-semialdehyde from L-glutamate: step 2/2. In terms of biological role, catalyzes the NADPH-dependent reduction of L-glutamate 5-phosphate into L-glutamate 5-semialdehyde and phosphate. The product spontaneously undergoes cyclization to form 1-pyrroline-5-carboxylate. This chain is Gamma-glutamyl phosphate reductase, found in Paraburkholderia phytofirmans (strain DSM 17436 / LMG 22146 / PsJN) (Burkholderia phytofirmans).